The sequence spans 955 residues: Leucine--tRNA ligase (955 aa).

The short motif at 51-61 (PYLNGVLHAGH) is the 'HIGH' region element. Residues 647-651 (KLSKS) carry the 'KMSKS' region motif. Lys-650 is a binding site for ATP.

This sequence belongs to the class-I aminoacyl-tRNA synthetase family.

The protein resides in the cytoplasm. It catalyses the reaction tRNA(Leu) + L-leucine + ATP = L-leucyl-tRNA(Leu) + AMP + diphosphate. This Methanococcus maripaludis (strain C5 / ATCC BAA-1333) protein is Leucine--tRNA ligase.